A 312-amino-acid polypeptide reads, in one-letter code: 2-dehydropantoate 2-reductase (312 aa).

NADP(+)-binding positions include 7–12 (GAGAMG), N105, and A131. N105 contacts substrate. The active-site Proton donor is the K187. Residues N191, N195, and S260 each contribute to the substrate site. E273 lines the NADP(+) pocket.

Belongs to the ketopantoate reductase family.

It localises to the cytoplasm. It carries out the reaction (R)-pantoate + NADP(+) = 2-dehydropantoate + NADPH + H(+). Its pathway is cofactor biosynthesis; (R)-pantothenate biosynthesis; (R)-pantoate from 3-methyl-2-oxobutanoate: step 2/2. Catalyzes the NADPH-dependent reduction of ketopantoate into pantoic acid. This chain is 2-dehydropantoate 2-reductase, found in Lactococcus lactis subsp. lactis (strain IL1403) (Streptococcus lactis).